We begin with the raw amino-acid sequence, 498 residues long: Protein flp (498 aa).

A run of 4 helical transmembrane segments spans residues 6–26 (LYFL…IHIT), 389–409 (FNIV…FSAY), 433–453 (LTLC…YLIL), and 471–491 (LALI…LLFL).

Its subcellular location is the cell membrane. Its precise function is unknown. Has no penicillin-binding activity and is not involved in methicillin resistance. The chain is Protein flp (flp) from Staphylococcus aureus (strain MW2).